A 584-amino-acid polypeptide reads, in one-letter code: AAA ATPase forming ring-shaped complexes (584 aa).

The stretch at 10–96 forms a coiled coil; it reads AQSGTEHAEQ…LKENLDAVTH (87 aa). The interval 40–66 is disordered; that stretch reads HQLQSAQRHAAGLSERRRAAEAQTQTA. 292–297 contributes to the ATP binding site; the sequence is GTGKTM.

This sequence belongs to the AAA ATPase family. As to quaternary structure, homohexamer. Assembles into a hexameric ring structure.

This chain is AAA ATPase forming ring-shaped complexes, found in Micrococcus luteus (strain ATCC 4698 / DSM 20030 / JCM 1464 / CCM 169 / CCUG 5858 / IAM 1056 / NBRC 3333 / NCIMB 9278 / NCTC 2665 / VKM Ac-2230) (Micrococcus lysodeikticus).